Reading from the N-terminus, the 284-residue chain is MSTAVHIVRSVAALRAQVGAWRDEGLSVALVPTMGALHAGHLSLVKRGLELADRAVASVFVNPTQFGPNEDFARYPRQEELDAAALSSAGCHLLFAPDVAEMYPEGFATTVSVSGVSDGLCGAVRPGHFAGVATVVTKLLLQCLPDVALFGEKDYQQLAVIRRFARDLDIPVRIEGVPTLREDDGLAMSSRNAYMTPEQRAIAPWLIRALTGIADGLRAGAKAADLCPMAVSGLLKAGFDSVDYIEVRDAASLAPAEILDRPLRILAAARLGKTRLIDNIGVEP.

34–41 (MGALHAGH) contributes to the ATP binding site. The active-site Proton donor is the His-41. Position 65 (Gln-65) interacts with (R)-pantoate. Gln-65 contacts beta-alanine. 151–154 (GEKD) provides a ligand contact to ATP. Residue Gln-157 participates in (R)-pantoate binding. ATP-binding positions include Leu-180 and 188-191 (MSSR).

This sequence belongs to the pantothenate synthetase family. As to quaternary structure, homodimer.

The protein resides in the cytoplasm. It carries out the reaction (R)-pantoate + beta-alanine + ATP = (R)-pantothenate + AMP + diphosphate + H(+). It participates in cofactor biosynthesis; (R)-pantothenate biosynthesis; (R)-pantothenate from (R)-pantoate and beta-alanine: step 1/1. In terms of biological role, catalyzes the condensation of pantoate with beta-alanine in an ATP-dependent reaction via a pantoyl-adenylate intermediate. The protein is Pantothenate synthetase of Paramagnetospirillum magneticum (strain ATCC 700264 / AMB-1) (Magnetospirillum magneticum).